The primary structure comprises 368 residues: Polymerase delta-interacting protein 2 (368 aa).

The transit peptide at 1 to 21 (MAGCVARRALAVGSRWWSRSL) directs the protein to the mitochondrion. The ApaG domain occupies 235-360 (RETTENIRVT…FSLESNKDEK (126 aa)). Phosphothreonine is present on Thr-292.

As to quaternary structure, interacts with PCNA and POLD2. Interacts with SSBP1. Interacts with PRIMPOL; leading to enhance DNA polymerase activity of PRIMPOL. Interacts with POLH. Interacts with POLD1; leading to stimulate DNA polymerase activity of POLD1.

The protein localises to the mitochondrion matrix. The protein resides in the nucleus. In terms of biological role, involved in DNA damage tolerance by regulating translesion synthesis (TLS) of templates carrying DNA damage lesions such as 8oxoG and abasic sites. May act by stimulating activity of DNA polymerases involved in TLS, such as PRIMPOL and polymerase delta (POLD1). This Mus musculus (Mouse) protein is Polymerase delta-interacting protein 2.